A 205-amino-acid chain; its full sequence is Small ribosomal subunit protein uS4 (205 aa).

The tract at residues 19–45 (IWGRPKSPVNRREYGPGQHGQRRKGKL) is disordered. The S4 RNA-binding domain occupies 94–157 (SRLDAVVYRA…KQLVIVLEAV (64 aa)).

Belongs to the universal ribosomal protein uS4 family. As to quaternary structure, part of the 30S ribosomal subunit. Contacts protein S5. The interaction surface between S4 and S5 is involved in control of translational fidelity.

In terms of biological role, one of the primary rRNA binding proteins, it binds directly to 16S rRNA where it nucleates assembly of the body of the 30S subunit. Functionally, with S5 and S12 plays an important role in translational accuracy. This Brucella anthropi (strain ATCC 49188 / DSM 6882 / CCUG 24695 / JCM 21032 / LMG 3331 / NBRC 15819 / NCTC 12168 / Alc 37) (Ochrobactrum anthropi) protein is Small ribosomal subunit protein uS4.